A 362-amino-acid polypeptide reads, in one-letter code: Salactin (362 aa).

The segment covering 1–10 has biased composition (acidic residues); it reads MSDDTEDDSG. Residues 1 to 28 are disordered; that stretch reads MSDDTEDDSGGESTADMEFGEQPAPLGV.

Forms dynamically unstable filaments. Monomers are added at the growing filament end. In vitro, salactin polymerizes in the presence of ATP and AMP-PNP but not in the presence of ADP, GTP, ATPgammaS or buffer alone.

The protein localises to the cytoplasm. In terms of biological role, actin homolog which might be involved in partitioning DNA between daughter cells when chromosomal copy number is low. In Halobacterium salinarum (strain ATCC 700922 / JCM 11081 / NRC-1) (Halobacterium halobium), this protein is Salactin.